The primary structure comprises 950 residues: MVFTPEDRLGKQCLLLPLLLLAAWKVGSGQLHYSVPEEAKHGTFVGRIAQDLGLELAELVPRLFRMASKDREDLLEVNLQNGILFVNSRIDREELCGRSAECSIHLEVIVDRPLQVFHVDVEVRDINDNPPLFPVEEQRVLIYESRLPDSVFPLEGASDADVGSNSILTYKLSSSEYFGLDVKINSDDNKQIGLLLKKSLDREEAPAHNLFLTATDGGKPELTGTVQLLVTVLDVNDNAPNFEQSEYEVRIFENADNGTTVIKLNASDRDEGANGAISYSFNSLVAAMVIDHFSIDRNTGEIVIRGNLDFEQENFYKIRIDATDKGHPPMAGHCTVLVRILDKNDNVPEIALTSLSLPVREDAQFGTVIALISVNDLDSGANGQVNCSLTPHVPFKLVSTFKNYYSLVLDSALDRESVSAYELVVTARDGGSPSLWATASLSVEVADVNDNAPAFAQPEYTVFVKENNPPGCHIFTVSARDADAQENALVSYSLVERRVGERALSSYISVHAESGKVYALQPLDHEELELLQFQVSARDAGVPPLGSNVTLQVFVLDENDNAPALLAPRVGGTGGAVSELVPRSVGAGQVVAKVRAVDADSGYNAWLSYELQPPASSARFPFRVGLYTGEISTTRVLDEADSPRHRLLVLVKDHGEPALTATATVLVSLVESGQAPKASSRASVGAAGPEAALVDVNVYLIIAICAVSSLLVLTLLLYTALRCSAPSTEGACTADKPTLVCSSAVGSWSYSQQRRQRVCSGEGPPKMDLMAFSPSLSPCPIMMGKAENQDLNEDHDAKPRQPNPDWRYSASLRAGMHSSVHLEEAGILRAGPGGPDQQWPTVSSATPEPEAGEVSPPVGAGVNSNSWTFKYGPGNPKQSGPGELPDKFIIPGSPAIISIRQEPANSQIDKSDFITFGKKEETKKKKKKKKGNKTQEKKEKGNSTTDNSDQ.

The first 29 residues, 1-29 (MVFTPEDRLGKQCLLLPLLLLAAWKVGSG), serve as a signal peptide directing secretion. The Extracellular portion of the chain corresponds to 30–697 (QLHYSVPEEA…GPEAALVDVN (668 aa)). Cadherin domains follow at residues 34-133 (SVPE…PPLF), 157-242 (ASDA…APNF), 243-350 (EQSE…VPEI), 351-455 (ALTS…APAF), 456-565 (AQPE…APAL), and 581-678 (VPRS…APKA). N-linked (GlcNAc...) asparagine glycosylation is found at Asn257, Asn265, Asn386, and Asn548. Residues 698 to 718 (VYLIIAICAVSSLLVLTLLLY) form a helical membrane-spanning segment. Topologically, residues 719-950 (TALRCSAPST…GNSTTDNSDQ (232 aa)) are cytoplasmic. PXXP repeat units lie at residues 799-802 (PRQP), 832-835 (PGGP), 873-876 (PGNP), and 891-894 (PGSP). Residues 799–894 (PRQPNPDWRY…PDKFIIPGSP (96 aa)) form a 4 X 4 AA repeats of P-X-X-P region. The interval 830 to 889 (AGPGGPDQQWPTVSSATPEPEAGEVSPPVGAGVNSNSWTFKYGPGNPKQSGPGELPDKFI) is disordered. The tract at residues 901–950 (QEPANSQIDKSDFITFGKKEETKKKKKKKKGNKTQEKKEKGNSTTDNSDQ) is disordered. Residues 909–923 (DKSDFITFGKKEETK) show a composition bias toward basic and acidic residues.

It localises to the cell membrane. Functionally, potential calcium-dependent cell-adhesion protein. May be involved in the establishment and maintenance of specific neuronal connections in the brain. This chain is Protocadherin alpha-6 (PCDHA6), found in Pan troglodytes (Chimpanzee).